We begin with the raw amino-acid sequence, 696 residues long: MDATVILPILKKKLAFLSGGKDRRSGLILTIPLCSDQTSMDELSVTLDYLLSIPSDKCKARGFTVIVDGRKSQWNVVKTVVLMLQNVVPAEVSLVCVVKPDEFWDKKVTHFCFWKEKDRLGFEVILVSGNKLTRYIEPNQLTEEFGGSLTYDHMDWLNKRLVFEKFTKESTSLLDELAVINNGSDKGSQNEKERSVDFNYLPSVDPETVLQTGHELLSELQQRRFNGSDGGVSWSPMDDELLAQPQVMKLLDSLREQYTRYQEVCRQRSKRTQLDEIQQKVMQVVNWLEGPGSEQLRTQWGIGDSIRASQALQQKHEEIESQHSEWFAVYVELNQQIAALLNAGDEEDLVELKTLQQRLSDVCYRQASQLEFRQNLLQTALDFHSVAQDLSQQLDGLLGMLCVDVAPTDGAAIQQTLKLLEEKLKSVDTGLQGLREKGQGLLDQITNQASWAYGKDVSTENKDNVDHIQGIMEDMQLRKQRCEDMVDVRRLKMLQMVQLFKCEEDAAQAVDWLNELLDALLKTHIRLGDDSQETKILLEKHRKFVDVAQSTYDYGRQLLQATVVLCQSLRCTSRSSGDTLPKLNRVWKQFTITSEERVHRLEMALAFHSNAEKILQECPDLGETVMDFEQFDEVEAVGKSVLDRLTVPVIYPDGTEQYFGTPSDMASTAEHIRERIKMVCLKKQQLLEPDESIRES.

In terms of domain architecture, CRAL-TRIO spans 1 to 153 (MDATVILPIL…EFGGSLTYDH (153 aa)). Spectrin repeat units lie at residues 272-378 (TQLD…NLLQ), 381-494 (LDFH…LKML), and 500-602 (FKCE…HRLE).

The protein belongs to the SOLO family.

Its function is as follows. May act as the primary docking protein directing membrane turnover and assembly of the transient receptor potential channels trpc4 and trpc5. Binds phospholipids. The protein is SEC14 domain and spectrin repeat-containing protein 1 (sestd1) of Xenopus tropicalis (Western clawed frog).